The sequence spans 87 residues: UPF0248 protein TON_0940 (87 aa).

It belongs to the UPF0248 family.

This chain is UPF0248 protein TON_0940, found in Thermococcus onnurineus (strain NA1).